The following is a 225-amino-acid chain: Isoprenyl transferase 1 (225 aa).

The active site involves Asp-3. Asp-3 contacts Mg(2+). Residues 4–7 (GNRR), Trp-8, His-21, and 49–51 (SME) contribute to the substrate site. Asn-52 functions as the Proton acceptor in the catalytic mechanism. Residues Arg-55, Arg-174, and 180–182 (RLS) contribute to the substrate site. Glu-193 contacts Mg(2+).

Belongs to the UPP synthase family. Homodimer. Requires Mg(2+) as cofactor.

In terms of biological role, catalyzes the condensation of isopentenyl diphosphate (IPP) with allylic pyrophosphates generating different type of terpenoids. The sequence is that of Isoprenyl transferase 1 from Corynebacterium glutamicum (strain ATCC 13032 / DSM 20300 / JCM 1318 / BCRC 11384 / CCUG 27702 / LMG 3730 / NBRC 12168 / NCIMB 10025 / NRRL B-2784 / 534).